A 327-amino-acid chain; its full sequence is Phosphoenolpyruvate transferase (327 aa).

D59 contacts 7,8-didemethyl-8-hydroxy-5-deazariboflavin.

It belongs to the CofD family. As to quaternary structure, homodimer. The cofactor is Mg(2+).

The enzyme catalyses enolpyruvoyl-2-diphospho-5'-guanosine + 7,8-didemethyl-8-hydroxy-5-deazariboflavin = dehydro coenzyme F420-0 + GMP + H(+). The protein operates within cofactor biosynthesis; coenzyme F420 biosynthesis. Its function is as follows. Catalyzes the transfer of the phosphoenolpyruvate moiety from enoylpyruvoyl-2-diphospho-5'-guanosine (EPPG) to 7,8-didemethyl-8-hydroxy-5-deazariboflavin (FO) with the formation of dehydro coenzyme F420-0 and GMP. The protein is Phosphoenolpyruvate transferase of Mycolicibacterium smegmatis (strain ATCC 700084 / mc(2)155) (Mycobacterium smegmatis).